A 506-amino-acid chain; its full sequence is Sodium-coupled neutral amino acid symporter 2 (506 aa).

The tract at residues 1 to 23 (MKKAEMGRFNISPDEDSSSYSSN) is disordered. At 1-76 (MKKAEMGRFN…HPGTTSFGMS (76 aa)) the chain is on the cytoplasmic side. Residues 1–96 (MKKAEMGRFN…SGILGLSYAM (96 aa)) form a regulates protein turnover upon amino acid deprivation region. Phosphoserine is present on residues serine 12, serine 21, serine 22, and serine 55. A helical membrane pass occupies residues 77–96 (VFNLSNAIVGSGILGLSYAM). Asparagine 82 lines the Na(+) pocket. Topologically, residues 97–102 (ANTGIA) are extracellular. A helical transmembrane segment spans residues 103 to 123 (LFIILLTFVSIFSLYSVHLLL). Over 124–158 (KTANEGGSLLYEQLGYKAFGLVGKLAASGSITMQN) the chain is Cytoplasmic. A helical transmembrane segment spans residues 159 to 177 (IGAMSSYLFIVKYELPLVI). Residues 178–188 (QALTNIEDKTG) lie on the Extracellular side of the membrane. Residues 189–209 (LWYLNGNYLVLLVSLVVILPL) traverse the membrane as a helical segment. Topologically, residues 210–217 (SLFRNLGY) are cytoplasmic. A helical membrane pass occupies residues 218 to 238 (LGYTSGLSLLCMVFFLIVVIC). Residues 239 to 292 (KKFQVPCPVEAALIINETINTTLTQPTALVPALSHNVTENDSCRPHYFIFNSQT) lie on the Extracellular side of the membrane. Cysteine 245 and cysteine 281 are oxidised to a cystine. Residues asparagine 258 and asparagine 274 are each glycosylated (N-linked (GlcNAc...) asparagine). A helical membrane pass occupies residues 293–313 (VYAVPILIFSFVCHPAVLPIY). Residues 314–329 (EELKDRSRRRMMNVSK) lie on the Cytoplasmic side of the membrane. A helical transmembrane segment spans residues 330–350 (ISFFAMFLMYLLAALFGYLTF). Topologically, residues 351-371 (YEHVESELLHTYSSILGTDIL) are extracellular. A helical membrane pass occupies residues 372–392 (LLIVRLAVLMAVTLTVPVVIF). Threonine 386 is a Na(+) binding site. The Cytoplasmic segment spans residues 393 to 413 (PIRSSVTHLLCASKDFSWWRH). A helical transmembrane segment spans residues 414-434 (SLITVSILAFTNLLVIFVPTI). The Extracellular portion of the chain corresponds to 435 to 436 (RD). Residues 437–457 (IFGFIGASAASMLIFILPSAF) traverse the membrane as a helical segment. Residues 458–472 (YIKLVKKEPMKSVQK) are Cytoplasmic-facing. A helical membrane pass occupies residues 473–495 (IGALFFLLSGVLVMTGSMALIVL). Over 496-506 (DWVHNAPGGGH) the chain is Extracellular.

It belongs to the amino acid/polyamine transporter 2 family. Polyubiquitination by NEDD4L regulates the degradation and the activity of SLC38A2.

It localises to the cell membrane. The enzyme catalyses L-alanine(in) + Na(+)(in) = L-alanine(out) + Na(+)(out). It carries out the reaction glycine(in) + Na(+)(in) = glycine(out) + Na(+)(out). It catalyses the reaction L-serine(in) + Na(+)(in) = L-serine(out) + Na(+)(out). The catalysed reaction is L-proline(in) + Na(+)(in) = L-proline(out) + Na(+)(out). The enzyme catalyses L-methionine(in) + Na(+)(in) = L-methionine(out) + Na(+)(out). It carries out the reaction L-histidine(in) + Na(+)(in) = L-histidine(out) + Na(+)(out). It catalyses the reaction L-asparagine(in) + Na(+)(in) = L-asparagine(out) + Na(+)(out). The catalysed reaction is L-glutamine(in) + Na(+)(in) = L-glutamine(out) + Na(+)(out). The enzyme catalyses L-threonine(in) + Na(+)(in) = L-threonine(out) + Na(+)(out). It carries out the reaction L-leucine(in) + Na(+)(in) = L-leucine(out) + Na(+)(out). It catalyses the reaction L-phenylalanine(in) + Na(+)(in) = L-phenylalanine(out) + Na(+)(out). Inhibited by N-methyl-D-glucamine. Inhibited by choline. Allosteric regulation of sodium ions binding by pH. Functionally, symporter that cotransports neutral amino acids and sodium ions from the extracellular to the intracellular side of the cell membrane. The transport is pH-sensitive, Li(+)-intolerant, electrogenic, driven by the Na(+) electrochemical gradient and cotransports of neutral amino acids and sodium ions with a stoichiometry of 1:1. May function in the transport of amino acids at the blood-brain barrier. May function in the transport of amino acids in the supply of maternal nutrients to the fetus through the placenta. Maintains a key metabolic glutamine/glutamate balance underpinning retrograde signaling by dendritic release of the neurotransmitter glutamate. Transports L-proline in differentiating osteoblasts for the efficient synthesis of proline-enriched proteins and provides proline essential for osteoblast differentiation and bone formation during bone development. This Pan paniscus (Pygmy chimpanzee) protein is Sodium-coupled neutral amino acid symporter 2.